A 586-amino-acid chain; its full sequence is Heterogeneous nuclear ribonucleoprotein L (586 aa).

A compositionally biased stretch (basic residues) spans 1–16 (MSRRLLPRAEKRRRRL). The interval 1–97 (MSRRLLPRAE…NYDDPHKTPA (97 aa)) is disordered. Residues 17 to 27 (EQRQQPDEQLR) show a composition bias toward basic and acidic residues. A compositionally biased stretch (low complexity) spans 28–37 (RAGAMVKMAA). The segment covering 38–54 (AGGGGGGGRYYGGGNEG) has biased composition (gly residues). Residues Lys59 and Lys62 each participate in a glycyl lysine isopeptide (Lys-Gly) (interchain with G-Cter in SUMO2) cross-link. Gly residues predominate over residues 69–87 (QHGGGGGGGSGAAGGGGGE). The residue at position 98 (Ser98) is a Phosphoserine. Residues 99–173 (PVVHIRGLID…HPAFVNYSTS (75 aa)) enclose the RRM 1 domain. Lys133 participates in a covalent cross-link: Glycyl lysine isopeptide (Lys-Gly) (interchain with G-Cter in SUMO2). Residue Ser182 is modified to Phosphoserine. Residues 190 to 267 (SVLLFTILNP…CTLKIEYAKP (78 aa)) enclose the RRM 2 domain. An N6-acetyllysine modification is found at Lys266. Positions 281–298 (DYTNPNLSGQGDPGSNPN) are enriched in polar residues. The tract at residues 281-376 (DYTNPNLSGQ…PPPPDYGPHA (96 aa)) is disordered. Ser288 and Ser295 each carry phosphoserine. Lys299 is covalently cross-linked (Glycyl lysine isopeptide (Lys-Gly) (interchain with G-Cter in SUMO2)). Residues Arg351 and Arg355 each carry the asymmetric dimethylarginine modification. Over residues 361 to 372 (GHPPPPPPPPDY) the composition is skewed to pro residues. Ser378 carries the post-translational modification Phosphoserine. RRM domains are found at residues 379-476 (PVLM…DFSE) and 492-580 (RIQH…LCFS). Phosphoserine; by CaMK4 is present on Ser541. Lys565 is covalently cross-linked (Glycyl lysine isopeptide (Lys-Gly) (interchain with G-Cter in SUMO2)).

In terms of assembly, identified in a IGF2BP1-dependent mRNP granule complex containing untranslated mRNAs. Interacts with HNRNPLL. Interacts with APEX1; the interaction is DNA-dependent. Component of a complex with SETD2. Interacts with ELAVL1. Part of a transcription inhibitory ribonucleoprotein complex composed at least of the circular RNA circZNF827, ZNF827 and HNRNPK. Interacts with CHD8 in an RNA-dependent manner. Phosphorylation at Ser-541 by CaMK4 enhances interaction with a CaMK4-responsive RNA element (CaRRE1), and prevents inclusion of the stress axis-regulated exon (STREX) of the KCNMA1 potassium channel transcripts upon membrane depolarization. As to expression, detected in hematopoietic cells, including lymphoid progenitor cells.

It localises to the nucleus. It is found in the nucleoplasm. The protein localises to the cytoplasm. Its function is as follows. Splicing factor binding to exonic or intronic sites and acting as either an activator or repressor of exon inclusion. Exhibits a binding preference for CA-rich elements. Component of the heterogeneous nuclear ribonucleoprotein (hnRNP) complexes and associated with most nascent transcripts. Associates, together with APEX1, to the negative calcium responsive element (nCaRE) B2 of the APEX2 promoter. As part of a ribonucleoprotein complex composed at least of ZNF827, HNRNPK and the circular RNA circZNF827 that nucleates the complex on chromatin, may negatively regulate the transcription of genes involved in neuronal differentiation. Regulates alternative splicing of a core group of genes involved in neuronal differentiation, likely by mediating H3K36me3-coupled transcription elongation and co-transcriptional RNA processing via interaction with CHD8. The sequence is that of Heterogeneous nuclear ribonucleoprotein L (Hnrnpl) from Mus musculus (Mouse).